The following is a 698-amino-acid chain: Polyribonucleotide nucleotidyltransferase (698 aa).

The Mg(2+) site is built by aspartate 490 and aspartate 496. Residues 557-616 (PKVVTMTIKPDKIRDVIGPGGKKINEIIDETGVKLDIEQDGTIFIGAVDQAMINRAREII) form the KH domain. Residues 626–694 (GQTYQATVKR…KQGRVNASHR (69 aa)) enclose the S1 motif domain.

It belongs to the polyribonucleotide nucleotidyltransferase family. The cofactor is Mg(2+).

Its subcellular location is the cytoplasm. It catalyses the reaction RNA(n+1) + phosphate = RNA(n) + a ribonucleoside 5'-diphosphate. In terms of biological role, involved in mRNA degradation. Catalyzes the phosphorolysis of single-stranded polyribonucleotides processively in the 3'- to 5'-direction. This is Polyribonucleotide nucleotidyltransferase from Staphylococcus aureus (strain MSSA476).